We begin with the raw amino-acid sequence, 184 residues long: Outer-membrane lipoprotein carrier protein (184 aa).

Residues 1–19 form the signal peptide; the sequence is MKAFLKILMVLIFVSVAYA.

It belongs to the LolA family. As to quaternary structure, monomer.

It is found in the periplasm. Functionally, participates in the translocation of lipoproteins from the inner membrane to the outer membrane. Only forms a complex with a lipoprotein if the residue after the N-terminal Cys is not an aspartate (The Asp acts as a targeting signal to indicate that the lipoprotein should stay in the inner membrane). This chain is Outer-membrane lipoprotein carrier protein, found in Helicobacter pylori (strain P12).